Reading from the N-terminus, the 396-residue chain is Probable sugar efflux transporter (396 aa).

The next 12 helical transmembrane spans lie at 15–35, 50–70, 81–101, 103–123, 136–156, 170–190, 209–229, 246–266, 275–295, 299–319, 333–353, and 364–384; these read VVTLAVAAFIFNTTEFVPVGL, VGIMLTIYAWVVALMSLPFML, LICLFVVFIASHVLSFLSWSF, VLVISRIGVAFAHAIFWSITA, AQALSLIATGTALAMVLGLPL, FFAIGIGALVTLLCLIKLLPL, PALMSIYLLTVVVVTAHYTAY, FATALLLLLGGAGIIGSVIFG, ALVSTAIALLLVCLALLLPAA, IHLGVLSIFWGIAMMIIGLGM, VAMALFSGIFNIGIGAGALVG, and MIGYVGAVPAFAALIWSIIIF.

This sequence belongs to the major facilitator superfamily. SotB (TC 2.A.1.2) family.

It is found in the cell inner membrane. Its function is as follows. Involved in the efflux of sugars. The physiological role may be the reduction of the intracellular concentration of toxic sugars or sugar metabolites. The sequence is that of Probable sugar efflux transporter from Shigella flexneri serotype 5b (strain 8401).